The chain runs to 165 residues: Growth arrest and DNA damage-inducible protein GADD45 alpha (165 aa).

T2 carries the phosphothreonine modification.

It belongs to the GADD45 family. Interacts with AURKA, PCNA, GADD45GIP1 and MAPK14.

Its subcellular location is the nucleus. In terms of biological role, might affect PCNA interaction with some CDK (cell division protein kinase) complexes; stimulates DNA excision repair in vitro and inhibits entry of cells into S phase. In T-cells, functions as a regulator of p38 MAPKs by inhibiting p88 phosphorylation and activity. In Cricetulus griseus (Chinese hamster), this protein is Growth arrest and DNA damage-inducible protein GADD45 alpha (GADD45A).